A 95-amino-acid polypeptide reads, in one-letter code: uncharacterized protein (95 aa).

Residues 1 to 12 (MQNFMNNLSGGS) are compositionally biased toward low complexity. The interval 1–27 (MQNFMNNLSGGSNKEGGEKSNDFLSSA) is disordered.

This is an uncharacterized protein from Schizosaccharomyces pombe (strain 972 / ATCC 24843) (Fission yeast).